Consider the following 173-residue polypeptide: MASIPATVATVAQANMVAPFTGLKSNAAFPVTKKVNDFSTLPSNGGRVQCMKVWPPLGKKRYETLSYLPNLTEVQLAKEVDYLLRNKWVPCLEFELEHGFVYRENARSPGYYDGRYWTMWKLPMFGCTDSAQVMKELQECKKEYPQAWIRIIGFDNVRQVQCISFIASKPDGF.

The transit peptide at 1–49 directs the protein to the chloroplast; sequence MASIPATVATVAQANMVAPFTGLKSNAAFPVTKKVNDFSTLPSNGGRVQ.

It belongs to the RuBisCO small chain family. As to quaternary structure, heterohexadecamer of 8 large and 8 small subunits.

Its subcellular location is the plastid. It localises to the chloroplast. RuBisCO catalyzes two reactions: the carboxylation of D-ribulose 1,5-bisphosphate, the primary event in carbon dioxide fixation, as well as the oxidative fragmentation of the pentose substrate. Both reactions occur simultaneously and in competition at the same active site. Although the small subunit is not catalytic it is essential for maximal activity. In Flaveria pringlei, this protein is Ribulose bisphosphate carboxylase small subunit, chloroplastic 5.